A 396-amino-acid polypeptide reads, in one-letter code: Phosphoglycerate kinase (396 aa).

Residues 21 to 23 (DFN), arginine 36, 59 to 62 (HLGK), arginine 119, and arginine 156 each bind substrate. ATP is bound by residues lysine 206, glycine 294, glutamate 325, and 352–355 (GGDS).

It belongs to the phosphoglycerate kinase family. In terms of assembly, monomer.

The protein localises to the cytoplasm. It catalyses the reaction (2R)-3-phosphoglycerate + ATP = (2R)-3-phospho-glyceroyl phosphate + ADP. The protein operates within carbohydrate degradation; glycolysis; pyruvate from D-glyceraldehyde 3-phosphate: step 2/5. The chain is Phosphoglycerate kinase from Listeria welshimeri serovar 6b (strain ATCC 35897 / DSM 20650 / CCUG 15529 / CIP 8149 / NCTC 11857 / SLCC 5334 / V8).